Consider the following 116-residue polypeptide: Phage-like element PBSX protein XkdD (116 aa).

The polypeptide is Phage-like element PBSX protein XkdD (xkdD) (Bacillus subtilis (strain 168)).